The following is an 88-amino-acid chain: Putative defensin-like protein 264 (88 aa).

The first 26 residues, 1-26 (MEKMVLRKVVLLAILLSLSCLWVAKA), serve as a signal peptide directing secretion. 3 disulfide bridges follow: cysteine 47–cysteine 65, cysteine 53–cysteine 70, and cysteine 57–cysteine 72.

Belongs to the DEFL family.

It is found in the secreted. This chain is Putative defensin-like protein 264, found in Arabidopsis thaliana (Mouse-ear cress).